The primary structure comprises 116 residues: Large ribosomal subunit protein bL19 (116 aa).

This sequence belongs to the bacterial ribosomal protein bL19 family.

This protein is located at the 30S-50S ribosomal subunit interface and may play a role in the structure and function of the aminoacyl-tRNA binding site. This is Large ribosomal subunit protein bL19 from Streptomyces avermitilis (strain ATCC 31267 / DSM 46492 / JCM 5070 / NBRC 14893 / NCIMB 12804 / NRRL 8165 / MA-4680).